We begin with the raw amino-acid sequence, 233 residues long: Lipoprotein-releasing system ATP-binding protein LolD (233 aa).

An ABC transporter domain is found at 6–233; it reads LQCDNLCKRY…TAELSLMGAE (228 aa). 42 to 49 lines the ATP pocket; sequence GSSGSGKS.

It belongs to the ABC transporter superfamily. Lipoprotein translocase (TC 3.A.1.125) family. As to quaternary structure, the complex is composed of two ATP-binding proteins (LolD) and two transmembrane proteins (LolC and LolE).

It is found in the cell inner membrane. In terms of biological role, part of the ABC transporter complex LolCDE involved in the translocation of mature outer membrane-directed lipoproteins, from the inner membrane to the periplasmic chaperone, LolA. Responsible for the formation of the LolA-lipoprotein complex in an ATP-dependent manner. Such a release is dependent of the sorting-signal (absence of an Asp at position 2 of the mature lipoprotein) and of LolA. The sequence is that of Lipoprotein-releasing system ATP-binding protein LolD from Escherichia coli (strain K12).